The sequence spans 96 residues: MTAAHGYTQQKDNYAKRLRRVEGQVRGIARMIEEDKYCIDVLTQISAVTSALRSVALNLLDEHLSHCVTRAVAEGGPGADGKLAEASAAIARLVRS.

At T2 the chain carries N-acetylthreonine. 3 residues coordinate Cu cation: C38, H63, and C67.

It belongs to the CsoR family.

It is found in the cytoplasm. In terms of biological role, under low copper conditions, represses the expression of lpqS, Rv2963, mymT, socA, socB, mmcO and its own expression. In the presence of copper, RicR dissociates from DNA, leading to the expression of the target genes. Members of the RicR regulon are important for copper resistance during infections and full virulence in a mouse model of infection. This chain is Copper-sensing transcriptional repressor RicR, found in Mycobacterium tuberculosis (strain ATCC 25618 / H37Rv).